The following is a 368-amino-acid chain: Methionine import ATP-binding protein MetN (368 aa).

One can recognise an ABC transporter domain in the interval 5–260 (IELNNLSVQF…PKEALTKQFI (256 aa)). Position 41–48 (41–48 (GYSGAGKS)) interacts with ATP.

This sequence belongs to the ABC transporter superfamily. Methionine importer (TC 3.A.1.24) family. The complex is composed of two ATP-binding proteins (MetN), two transmembrane proteins (MetI) and a solute-binding protein (MetQ).

The protein resides in the cell membrane. The enzyme catalyses L-methionine(out) + ATP + H2O = L-methionine(in) + ADP + phosphate + H(+). It catalyses the reaction D-methionine(out) + ATP + H2O = D-methionine(in) + ADP + phosphate + H(+). Its function is as follows. Part of the ABC transporter complex MetNIQ involved in methionine import. Responsible for energy coupling to the transport system. This Lactococcus lactis subsp. cremoris (strain MG1363) protein is Methionine import ATP-binding protein MetN.